Consider the following 134-residue polypeptide: Phosphoribosyl-AMP cyclohydrolase (134 aa).

Asp-90 is a binding site for Mg(2+). Cys-91 contacts Zn(2+). Asp-92 and Asp-94 together coordinate Mg(2+). Cys-107 and Cys-114 together coordinate Zn(2+).

This sequence belongs to the PRA-CH family. Homodimer. The cofactor is Mg(2+). Requires Zn(2+) as cofactor.

Its subcellular location is the cytoplasm. It carries out the reaction 1-(5-phospho-beta-D-ribosyl)-5'-AMP + H2O = 1-(5-phospho-beta-D-ribosyl)-5-[(5-phospho-beta-D-ribosylamino)methylideneamino]imidazole-4-carboxamide. It functions in the pathway amino-acid biosynthesis; L-histidine biosynthesis; L-histidine from 5-phospho-alpha-D-ribose 1-diphosphate: step 3/9. In terms of biological role, catalyzes the hydrolysis of the adenine ring of phosphoribosyl-AMP. The protein is Phosphoribosyl-AMP cyclohydrolase of Arthrobacter sp. (strain FB24).